A 390-amino-acid polypeptide reads, in one-letter code: MTTPSPTPPLAAAEVAAAAGLQQRDLLAVLDRVGLEPAVAFLVHDLTARCDTPDNPDAARIGLAVEHSGHRTERVLAVRKGEPVRVDEETAGPPPVRLTFDLADLVRGVYGPPPGPGAGLFRVERDDAWFVKNADDAEPFRIFESYMRAVDVLVRAATSRPGDLGRLAARHASDKWGLWHWFTPLYEHHFARLRHQPVRVLELGIGGYQNPDEGGGSLKMWRSYFPQGRIFGVDYFPKHGLDEDRIHTLQGSQDDAGFLRRVAEEHGPFDIVIDDGSHVAGHQQTAFRTLFPAVRNGGFYVIEDLWTAYCPGYGGAATARAEGRTSIGLLKSLLDDLHYEEWTAPEPAAPGFAAPSLVGVHVYRNLAVLEKGRNSEGTIPFFAPREIDYV.

S-adenosyl-L-methionine contacts are provided by residues 202–208 (ELGIGGY), Ser217, Asp234, 252–253 (SQ), and Asp275. Asp275 is a binding site for Mg(2+). His278 functions as the Proton acceptor in the catalytic mechanism. 2 residues coordinate Mg(2+): Glu303 and Asp304.

The protein belongs to the methyltransferase OleY/MycE family. Mg(2+) is required as a cofactor.

It catalyses the reaction 8-demethyl-8-(2-O-methyl-alpha-L-rhamnosyl)-tetracenomycin C + S-adenosyl-L-methionine = 8-demethyl-8-(2,3-di-O-methyl-alpha-L-rhamnosyl)-tetracenomycin C + S-adenosyl-L-homocysteine + H(+). Its pathway is antibiotic biosynthesis. O-methyltransferase involved in the biosynthesis of the permethylated L-rhamnose moiety of elloramycin, an antitumor polyketide. Mediates the methylation of the hydroxy groups at the 3'-position after the sugar moiety has been attached to the aglycon. The protein is 8-demethyl-8-(2-methoxy-alpha-L-rhamnosyl)-tetracenomycin-C 3'-O-methyltransferase of Streptomyces olivaceus.